Here is a 248-residue protein sequence, read N- to C-terminus: Coenzyme F420:L-glutamate ligase (248 aa).

GTP-binding positions include 15–18 (IPLI), 45–46 (ET), and Lys-50. Position 115 (Asp-115) interacts with a divalent metal cation. A GTP-binding site is contributed by Asn-118. Asp-155, Ser-156, and Gln-213 together coordinate a divalent metal cation. 211–218 (MGQSNEGI) contacts GTP.

This sequence belongs to the CofE family. As to quaternary structure, homodimer. The cofactor is Mg(2+). Requires Mn(2+) as cofactor. K(+) serves as cofactor.

The enzyme catalyses oxidized coenzyme F420-0 + GTP + L-glutamate = oxidized coenzyme F420-1 + GDP + phosphate + H(+). It carries out the reaction oxidized coenzyme F420-1 + GTP + L-glutamate = oxidized coenzyme F420-2 + GDP + phosphate + H(+). The protein operates within cofactor biosynthesis; coenzyme F420 biosynthesis. Functionally, catalyzes the GTP-dependent successive addition of two or more gamma-linked L-glutamates to the L-lactyl phosphodiester of 7,8-didemethyl-8-hydroxy-5-deazariboflavin (F420-0) to form coenzyme F420-0-glutamyl-glutamate (F420-2) or polyglutamated F420 derivatives. This is Coenzyme F420:L-glutamate ligase from Methanococcus maripaludis (strain DSM 14266 / JCM 13030 / NBRC 101832 / S2 / LL).